The sequence spans 525 residues: CBL-interacting protein kinase 21 (525 aa).

The region spanning 87-342 is the Protein kinase domain; that stretch reads YEMGRALGEG…ITGIRAHEWF (256 aa). Residues 93-101 and Lys116 contribute to the ATP site; that span reads LGEGHFGKV. Asp210 (proton acceptor) is an active-site residue. The interval 228 to 257 is activation loop; that stretch reads DFGLSALPQNQRKDGLLHTTCGSPNYIAPE. One can recognise an NAF domain in the interval 372–401; sequence DIETSPAISQINAFQLIGMSSCLDLSGFFE. Residues 407-436 are PPI; it reads ERKIRFVSNYSPTSLFEKIESTVTEKGFQV.

Belongs to the protein kinase superfamily. CAMK Ser/Thr protein kinase family. SNF1 subfamily. Mn(2+) serves as cofactor.

The catalysed reaction is L-seryl-[protein] + ATP = O-phospho-L-seryl-[protein] + ADP + H(+). It catalyses the reaction L-threonyl-[protein] + ATP = O-phospho-L-threonyl-[protein] + ADP + H(+). Functionally, CIPK serine-threonine protein kinases interact with CBL proteins. Binding of a CBL protein to the regulatory NAF domain of CIPK protein lead to the activation of the kinase in a calcium-dependent manner. This Oryza sativa subsp. japonica (Rice) protein is CBL-interacting protein kinase 21 (CIPK21).